Reading from the N-terminus, the 237-residue chain is 1-(5-phosphoribosyl)-5-[(5-phosphoribosylamino)methylideneamino] imidazole-4-carboxamide isomerase (237 aa).

Asp-8 (proton acceptor) is an active-site residue. Asp-130 functions as the Proton donor in the catalytic mechanism.

The protein belongs to the HisA/HisF family.

The protein localises to the cytoplasm. The enzyme catalyses 1-(5-phospho-beta-D-ribosyl)-5-[(5-phospho-beta-D-ribosylamino)methylideneamino]imidazole-4-carboxamide = 5-[(5-phospho-1-deoxy-D-ribulos-1-ylimino)methylamino]-1-(5-phospho-beta-D-ribosyl)imidazole-4-carboxamide. It participates in amino-acid biosynthesis; L-histidine biosynthesis; L-histidine from 5-phospho-alpha-D-ribose 1-diphosphate: step 4/9. This Caldicellulosiruptor bescii (strain ATCC BAA-1888 / DSM 6725 / KCTC 15123 / Z-1320) (Anaerocellum thermophilum) protein is 1-(5-phosphoribosyl)-5-[(5-phosphoribosylamino)methylideneamino] imidazole-4-carboxamide isomerase.